A 274-amino-acid polypeptide reads, in one-letter code: NAD-dependent protein deacylase (274 aa).

Residues 4–274 form the Deacetylase sirtuin-type domain; the sequence is CLLPSSDMDA…GELLPKALAP (271 aa). Residue 29–48 coordinates NAD(+); sequence GAGVSAESGVPTFRGAGGLW. Tyrosine 73 and arginine 76 together coordinate substrate. 111–114 provides a ligand contact to NAD(+); it reads QNID. Catalysis depends on histidine 129, which acts as the Proton acceptor. Cysteine 137, cysteine 140, cysteine 178, and cysteine 183 together coordinate Zn(2+). NAD(+)-binding positions include 220–222, 246–248, and cysteine 264; these read GTS and NME.

The protein belongs to the sirtuin family. Class III subfamily. The cofactor is Zn(2+).

The protein localises to the mitochondrion. It carries out the reaction N(6)-malonyl-L-lysyl-[protein] + NAD(+) + H2O = 2''-O-malonyl-ADP-D-ribose + nicotinamide + L-lysyl-[protein]. It catalyses the reaction N(6)-succinyl-L-lysyl-[protein] + NAD(+) + H2O = 2''-O-succinyl-ADP-D-ribose + nicotinamide + L-lysyl-[protein]. The enzyme catalyses N(6)-glutaryl-L-lysyl-[protein] + NAD(+) + H2O = 2''-O-glutaryl-ADP-D-ribose + nicotinamide + L-lysyl-[protein]. Functionally, NAD-dependent lysine demalonylase, desuccinylase and deglutarylase that specifically removes malonyl, succinyl and glutaryl groups on target proteins. Has weak NAD-dependent protein deacetylase activity; however this activity may not be physiologically relevant in vivo. In Daphnia pulex (Water flea), this protein is NAD-dependent protein deacylase.